Reading from the N-terminus, the 368-residue chain is 3-dehydroquinate synthase (368 aa).

NAD(+) is bound by residues 80 to 85 (DAESAK), 114 to 118 (GAATD), 138 to 139 (TT), Lys151, and Lys160. The Zn(2+) site is built by Glu193, His255, and His271.

Belongs to the sugar phosphate cyclases superfamily. Dehydroquinate synthase family. Co(2+) is required as a cofactor. It depends on Zn(2+) as a cofactor. The cofactor is NAD(+).

Its subcellular location is the cytoplasm. It catalyses the reaction 7-phospho-2-dehydro-3-deoxy-D-arabino-heptonate = 3-dehydroquinate + phosphate. It participates in metabolic intermediate biosynthesis; chorismate biosynthesis; chorismate from D-erythrose 4-phosphate and phosphoenolpyruvate: step 2/7. Its function is as follows. Catalyzes the conversion of 3-deoxy-D-arabino-heptulosonate 7-phosphate (DAHP) to dehydroquinate (DHQ). In Corynebacterium jeikeium (strain K411), this protein is 3-dehydroquinate synthase.